Here is a 298-residue protein sequence, read N- to C-terminus: ADP/ATP translocase 2 (298 aa).

N-acetylmethionine is present on methionine 1. Over 1-7 (MTDAAVS) the chain is Mitochondrial intermembrane. Threonine 2 carries the N-acetylthreonine; in ADP/ATP translocase 2, N-terminally processed modification. The stretch at 6–98 (VSFAKDFLAG…FAFKDKYKQI (93 aa)) is one Solcar 1 repeat. Position 7 is a phosphoserine (serine 7). A helical transmembrane segment spans residues 8–37 (FAKDFLAGGVAAAISKTAVAPIERVKLLLQ). Position 23 is an N6-malonyllysine (lysine 23). The Mitochondrial matrix portion of the chain corresponds to 38 to 74 (VQHASKQITADKQYKGIIDCVVRIPKEQGVLSFWRGN). Lysine 43 is modified (N6-succinyllysine). Lysine 52 is subject to N6,N6,N6-trimethyllysine; alternate. Lysine 52 is modified (N6,N6-dimethyllysine; alternate). The residue at position 52 (lysine 52) is an N6-methyllysine; alternate. Residues 75–99 (LANVIRYFPTQALNFAFKDKYKQIF) form a helical membrane-spanning segment. Positions 80 and 92 each coordinate ADP. Residues lysine 92 and lysine 96 each carry the N6-malonyllysine modification. At 100–109 (LGGVDKRTQF) the chain is on the mitochondrial intermembrane side. The residue at position 105 (lysine 105) is an N6-acetyllysine; alternate. Lysine 105 carries the post-translational modification N6-succinyllysine; alternate. The chain crosses the membrane as a helical span at residues 110–130 (WRYFAGNLASGGAAGATSLCF). Solcar repeat units lie at residues 111-201 (RYFA…AKGM) and 212-297 (ISWM…IKKF). Residues 131 to 178 (VYPLDFARTRLAADVGKAGAEREFRGLGDCLVKIYKSDGIRGLYQGFN) are Mitochondrial matrix-facing. An N6-methyllysine; alternate modification is found at lysine 147. Lysine 147 bears the N6-acetyllysine; alternate mark. N6-succinyllysine; alternate is present on lysine 147. Lysine 147 is subject to N6-malonyllysine; alternate. N6-acetyllysine is present on residues lysine 163 and lysine 166. A helical membrane pass occupies residues 179–199 (VSVQGIIIYRAAYFGIYDTAK). Over 200 to 210 (GMLPDPKNTHI) the chain is Mitochondrial intermembrane. The helical transmembrane segment at 211-231 (FISWMIAQSVTAVAGLTSYPF) threads the bilayer. Residues 232–273 (DTVRRRMMMQSGRKGTDIMYTGTLDCWRKIARDEGAKAFFKG) are Mitochondrial matrix-facing. Residue arginine 235 participates in ADP binding. Residues 235 to 240 (RRRMMM) form an important for transport activity region. The Nucleotide carrier signature motif motif lies at 235-240 (RRRMMM). Lysine 268 carries the post-translational modification N6-acetyllysine; alternate. Residue lysine 268 is modified to N6-succinyllysine; alternate. Residues 274 to 291 (AWSNVLRGMGGAFVLVLY) form a helical membrane-spanning segment. Topologically, residues 292–298 (DEIKKFT) are mitochondrial intermembrane.

It belongs to the mitochondrial carrier (TC 2.A.29) family. In terms of assembly, monomer. Component of the MMXD complex, which includes CIAO1, ERCC2, CIAO2B, MMS19 and SLC25A5/ANT2. Interacts with AK4. Interacts with TIMM44; leading to inhibit the presequence translocase TIMM23, thereby promoting stabilization of PINK1. Post-translationally, trimethylated by ANTKMT at Lys-52.

The protein resides in the mitochondrion inner membrane. It localises to the membrane. The enzyme catalyses ADP(in) + ATP(out) = ADP(out) + ATP(in). It catalyses the reaction H(+)(in) = H(+)(out). With respect to regulation, the matrix-open state (m-state) is inhibited by the membrane-permeable bongkrekic acid (BKA). The cytoplasmic-open state (c-state) is inhibited by the membrane-impermeable toxic inhibitor carboxyatractyloside (CATR). Proton transporter activity is inhibited by ADP:ATP antiporter activity. Its function is as follows. ADP:ATP antiporter that mediates import of ADP into the mitochondrial matrix for ATP synthesis, and export of ATP out to fuel the cell. Cycles between the cytoplasmic-open state (c-state) and the matrix-open state (m-state): operates by the alternating access mechanism with a single substrate-binding site intermittently exposed to either the cytosolic (c-state) or matrix (m-state) side of the inner mitochondrial membrane. In addition to its ADP:ATP antiporter activity, also involved in mitochondrial uncoupling and mitochondrial permeability transition pore (mPTP) activity. Plays a role in mitochondrial uncoupling by acting as a proton transporter: proton transport uncouples the proton flows via the electron transport chain and ATP synthase to reduce the efficiency of ATP production and cause mitochondrial thermogenesis. Proton transporter activity is inhibited by ADP:ATP antiporter activity, suggesting that SLC25A5/ANT2 acts as a master regulator of mitochondrial energy output by maintaining a delicate balance between ATP production (ADP:ATP antiporter activity) and thermogenesis (proton transporter activity). Proton transporter activity requires free fatty acids as cofactor, but does not transport it. Probably mediates mitochondrial uncoupling in tissues that do not express UCP1. Also plays a key role in mPTP opening, a non-specific pore that enables free passage of the mitochondrial membranes to solutes of up to 1.5 kDa, and which contributes to cell death. It is however unclear if SLC25A5/ANT2 constitutes a pore-forming component of mPTP or regulates it. Acts as a regulator of mitophagy independently of ADP:ATP antiporter activity: promotes mitophagy via interaction with TIMM44, leading to inhibit the presequence translocase TIMM23, thereby promoting stabilization of PINK1. As part of the mitotic spindle-associated MMXD complex it may play a role in chromosome segregation. This is ADP/ATP translocase 2 from Bos taurus (Bovine).